Here is a 460-residue protein sequence, read N- to C-terminus: Oxysterols receptor LXR-beta (460 aa).

Positions 1-14 (MSSPTTSSLDTPLP) are enriched in low complexity. The interval 1 to 78 (MSSPTTSSLD…PERKRKKGPA (78 aa)) is disordered. The interval 1-85 (MSSPTTSSLD…GPAPKMLGHE (85 aa)) is transactivation AF-1; required for ligand-independent transactivation function. The span at 36–45 (EPWPGGPDPD) shows a compositional bias: pro residues. The nuclear receptor DNA-binding region spans 84–161 (HELCRVCGDK…AGMREQCVLS (78 aa)). NR C4-type zinc fingers lie at residues 87–107 (CRVC…CEGC) and 125–149 (CRGG…LRKC). The disordered stretch occupies residues 169–216 (KIRKQQQESQSQSQSPVGPQGSSSSASGPGASPGGSEAGSQGSGEGEG). Low complexity predominate over residues 175-198 (QESQSQSQSPVGPQGSSSSASGPG). The span at 199 to 215 (ASPGGSEAGSQGSGEGE) shows a compositional bias: gly residues. The interval 219–460 (LTAAQELMIQ…LLSEIWDVHE (242 aa)) is transactivation AF-2; required for ligand-dependent transactivation function; mediates interaction with CCAR2. In terms of domain architecture, NR LBD spans 222 to 460 (AQELMIQQLV…LLSEIWDVHE (239 aa)). Glycyl lysine isopeptide (Lys-Gly) (interchain with G-Cter in SUMO2) cross-links involve residues Lys-409 and Lys-447.

This sequence belongs to the nuclear hormone receptor family. NR1 subfamily. Forms a heterodimer with RXR. Interacts with CCAR2 (via N-terminus) in a ligand-independent manner. Interacts (when sumoylated) with GPS2; interaction with GPS2 onto hepatic acute phase protein promoters prevents N-Cor corepressor complex dissociation. Interacts with ABCA12 and ABCA1; this interaction is required for ABCA1 localization to the cell surface and is necessary for its normal activity and stability. Sumoylated by SUMO2 at Lys-409 and Lys-447 during the hepatic acute phase response, leading to promote interaction with GPS2 and prevent N-Cor corepressor complex dissociation. In terms of tissue distribution, ubiquitous.

The protein resides in the nucleus. In terms of biological role, nuclear receptor that exhibits a ligand-dependent transcriptional activation activity. Binds preferentially to double-stranded oligonucleotide direct repeats having the consensus half-site sequence 5'-AGGTCA-3' and 4-nt spacing (DR-4). Regulates cholesterol uptake through MYLIP-dependent ubiquitination of LDLR, VLDLR and LRP8; DLDLR and LRP8. Interplays functionally with RORA for the regulation of genes involved in liver metabolism. Induces LPCAT3-dependent phospholipid remodeling in endoplasmic reticulum (ER) membranes of hepatocytes, driving SREBF1 processing and lipogenesis. Via LPCAT3, triggers the incorporation of arachidonate into phosphatidylcholines of ER membranes, increasing membrane dynamics and enabling triacylglycerols transfer to nascent very low-density lipoprotein (VLDL) particles. Via LPCAT3 also counteracts lipid-induced ER stress response and inflammation, likely by modulating SRC kinase membrane compartmentalization and limiting the synthesis of lipid inflammatory mediators. Plays an anti-inflammatory role during the hepatic acute phase response by acting as a corepressor: inhibits the hepatic acute phase response by preventing dissociation of the N-Cor corepressor complex. The protein is Oxysterols receptor LXR-beta (NR1H2) of Homo sapiens (Human).